The sequence spans 145 residues: Protein X (145 aa).

Residues 68-117 (PCALRFTSARRMETTVNAHQVLPKVLHKRTLGLSAMSTTDLEAYFKDCVF) form a mitochondrial targeting sequence region.

It belongs to the orthohepadnavirus protein X family. May form homodimer. May interact with host CEBPA, CFLAR, CREB1, DDB1, E4F1, HBXIP, HSPD1/HSP60, NFKBIA, POLR2E and SMAD4. Interacts with host SMC5-SMC6 complex and induces its degradation. Interacts with host TRPC4AP; leading to prevent ubiquitination of TRPC4AP. Interacts with host PLSCR1; this interaction promotes ubiquitination and degradation of HBx and impairs HBx-mediated cell proliferation. A fraction may be phosphorylated in insect cells and HepG2 cells, a human hepatoblastoma cell line. Phosphorylated in vitro by host protein kinase C or mitogen-activated protein kinase. N-acetylated in insect cells.

The protein resides in the host cytoplasm. It localises to the host nucleus. The protein localises to the host mitochondrion. Functionally, multifunctional protein that plays a role in silencing host antiviral defenses and promoting viral transcription. Does not seem to be essential for HBV infection. May be directly involved in development of cirrhosis and liver cancer (hepatocellular carcinoma). Most of cytosolic activities involve modulation of cytosolic calcium. The effect on apoptosis is controversial depending on the cell types in which the studies have been conducted. May induce apoptosis by localizing in mitochondria and causing loss of mitochondrial membrane potential. May also modulate apoptosis by binding host CFLAR, a key regulator of the death-inducing signaling complex (DISC). Promotes viral transcription by using the host E3 ubiquitin ligase DDB1 to target the SMC5-SMC6 complex to proteasomal degradation. This host complex would otherwise bind to viral episomal DNA, and prevents its transcription. Moderately stimulates transcription of many different viral and cellular transcription elements. Promoters and enhancers stimulated by HBx contain DNA binding sites for NF-kappa-B, AP-1, AP-2, c-EBP, ATF/CREB, or the calcium-activated factor NF-AT. The chain is Protein X from Homo sapiens (Human).